Here is a 112-residue protein sequence, read N- to C-terminus: Putative pterin-4-alpha-carbinolamine dehydratase (112 aa).

It belongs to the pterin-4-alpha-carbinolamine dehydratase family.

The catalysed reaction is (4aS,6R)-4a-hydroxy-L-erythro-5,6,7,8-tetrahydrobiopterin = (6R)-L-erythro-6,7-dihydrobiopterin + H2O. In Shewanella baltica (strain OS155 / ATCC BAA-1091), this protein is Putative pterin-4-alpha-carbinolamine dehydratase.